Consider the following 225-residue polypeptide: Helicostatins (225 aa).

Positions 1–18 (MLYSSLPVCFLVLGAALC) are cleaved as a signal peptide. A propeptide spanning residues 19-48 (APERMQNEAEPHDLQPHEAEPHSDHVAPLA) is cleaved from the precursor. 3 positions are modified to leucine amide: leucine 58, leucine 79, and leucine 90. A propeptide spanning residues 94–127 (SVDEDQSNDEQQLTTSDLDQAALAELFDQYDDAE) is cleaved from the precursor. A Leucine amide modification is found at leucine 137. A propeptide spanning residues 141 to 149 (FADDETSEE) is cleaved from the precursor. 5 positions are modified to leucine amide: leucine 159, leucine 170, leucine 181, leucine 192, and leucine 206. A disordered region spans residues 205 to 225 (GLGKRSGDDVSADDSDNYFDV). Residues 210–225 (SGDDVSADDSDNYFDV) constitute a propeptide that is removed on maturation. A compositionally biased stretch (acidic residues) spans 214 to 225 (VSADDSDNYFDV).

This sequence belongs to the allatostatin family. As to expression, highly expressed in the CNS and gut of larvae. Also expressed in the cells of the larval brain and ventral nerve cord and in endocrine cells of the midgut.

Its subcellular location is the secreted. May act as a neurotransmitter or neuromodulator. The sequence is that of Helicostatins from Helicoverpa armigera (Cotton bollworm).